The primary structure comprises 112 residues: DNA-directed RNA polymerase subunit Rpo11 (112 aa).

Belongs to the archaeal Rpo11/eukaryotic RPB11/RPC19 RNA polymerase subunit family. As to quaternary structure, part of the RNA polymerase complex.

It localises to the cytoplasm. The enzyme catalyses RNA(n) + a ribonucleoside 5'-triphosphate = RNA(n+1) + diphosphate. In terms of biological role, DNA-dependent RNA polymerase (RNAP) catalyzes the transcription of DNA into RNA using the four ribonucleoside triphosphates as substrates. The polypeptide is DNA-directed RNA polymerase subunit Rpo11 (Methanopyrus kandleri (strain AV19 / DSM 6324 / JCM 9639 / NBRC 100938)).